Consider the following 141-residue polypeptide: uncharacterized protein (141 aa).

This is an uncharacterized protein from Caenorhabditis elegans.